The sequence spans 1414 residues: Protein KATNIP homolog (1414 aa).

7 disordered regions span residues M1–H32, Q80–I116, G139–Q158, V712–T731, S756–N783, K823–Y861, and Q924–P943. Basic and acidic residues-rich tracts occupy residues R10–H32 and L86–C101. Positions D147 to Q158 are enriched in acidic residues. Composition is skewed to polar residues over residues N832–R843 and Q924–S940.

The protein localises to the cytoplasm. It localises to the cytoskeleton. The protein resides in the cilium axoneme. Its subcellular location is the cilium basal body. May control cilium integrity. This Xenopus laevis (African clawed frog) protein is Protein KATNIP homolog.